The chain runs to 179 residues: uncharacterized protein (179 aa).

The tract at residues 160–179 (QPIEPNGTQPATETKTPVGV) is disordered. A compositionally biased stretch (polar residues) spans 165–179 (NGTQPATETKTPVGV).

The protein belongs to the Dps family.

This is an uncharacterized protein from Anabaena variabilis.